A 78-amino-acid polypeptide reads, in one-letter code: ATP synthase subunit c (78 aa).

A run of 2 helical transmembrane segments spans residues 11-31 and 53-73; these read FIGA…VGHV and LFVG…IALL.

The protein belongs to the ATPase C chain family. In terms of assembly, F-type ATPases have 2 components, F(1) - the catalytic core - and F(0) - the membrane proton channel. F(1) has five subunits: alpha(3), beta(3), gamma(1), delta(1), epsilon(1). F(0) has four main subunits: a(1), b(1), b'(1) and c(10-14). The alpha and beta chains form an alternating ring which encloses part of the gamma chain. F(1) is attached to F(0) by a central stalk formed by the gamma and epsilon chains, while a peripheral stalk is formed by the delta, b and b' chains.

Its subcellular location is the cell inner membrane. Functionally, f(1)F(0) ATP synthase produces ATP from ADP in the presence of a proton or sodium gradient. F-type ATPases consist of two structural domains, F(1) containing the extramembraneous catalytic core and F(0) containing the membrane proton channel, linked together by a central stalk and a peripheral stalk. During catalysis, ATP synthesis in the catalytic domain of F(1) is coupled via a rotary mechanism of the central stalk subunits to proton translocation. In terms of biological role, key component of the F(0) channel; it plays a direct role in translocation across the membrane. A homomeric c-ring of between 10-14 subunits forms the central stalk rotor element with the F(1) delta and epsilon subunits. The polypeptide is ATP synthase subunit c (Cereibacter sphaeroides (strain ATCC 17025 / ATH 2.4.3) (Rhodobacter sphaeroides)).